The sequence spans 510 residues: MIWHVQNENFILDSTRIFMKAFHLLLFHGSFIFPECILIFGLILLLMIDLTSDQKDRPWFYFISSTSLVMSITALLFRWKEEPIISFSGNFQTNNFNEIFQFLILLCSTLCIPLSVEYIECTEMAITEFLLFVLTATLGGMFLCGANDFITIFVAPECFSLCSYLLSGYTKRDVRSNEATTKYLLMGGASSSILVHGFSWLYGSSGGEIELQEIVNGLINTQMYNSPGISIALISITVGIGFKLSPAPFHQWTPDVYEGSPTPVVAFLSVTSKVAASASATRIFDIPFYFSSNEWHLLLEILAILSMILGNLIAITQTSMKRMLAYSSIGQIGYVIIGIIVGDSNDGYASMITYMLFYISMNLGTFARIVSFGLRTGTDNIRDYAGLYTKDPFLALSLALCLLSLGGLPPLAGFFGKLHLFWCGWQAGLYFLVSIGLLTSVVSIYYYLKIIKLLMTGRNQEITPHVRNYRRSPLRSNNSIEWSMTVCVIASTIPGISMNPILAIAQDTLF.

The next 12 helical transmembrane spans lie at 24–44 (LLLF…GLIL), 59–79 (WFYF…LFRW), 99–119 (IFQF…VEYI), 124–144 (MAIT…MFLC), 149–169 (FITI…LSGY), 183–203 (YLLM…WLYG), 229–249 (ISIA…PAPF), 295–315 (WHLL…LIAI), 323–343 (MLAY…IVGD), 347–367 (GYAS…GTFA), 395–415 (ALSL…AGFF), and 418–438 (LHLF…IGLL).

It belongs to the complex I subunit 2 family. As to quaternary structure, NDH is composed of at least 16 different subunits, 5 of which are encoded in the nucleus.

It localises to the plastid. The protein localises to the chloroplast thylakoid membrane. The catalysed reaction is a plastoquinone + NADH + (n+1) H(+)(in) = a plastoquinol + NAD(+) + n H(+)(out). The enzyme catalyses a plastoquinone + NADPH + (n+1) H(+)(in) = a plastoquinol + NADP(+) + n H(+)(out). In terms of biological role, NDH shuttles electrons from NAD(P)H:plastoquinone, via FMN and iron-sulfur (Fe-S) centers, to quinones in the photosynthetic chain and possibly in a chloroplast respiratory chain. The immediate electron acceptor for the enzyme in this species is believed to be plastoquinone. Couples the redox reaction to proton translocation, and thus conserves the redox energy in a proton gradient. This is NAD(P)H-quinone oxidoreductase subunit 2, chloroplastic from Phormium tenax (New Zealand flax).